Consider the following 315-residue polypeptide: Ribosomal RNA small subunit methyltransferase H (315 aa).

Residues 37-39, Asp57, Phe83, Asp105, and Gln112 each bind S-adenosyl-L-methionine; that span reads GGH.

The protein belongs to the methyltransferase superfamily. RsmH family.

The protein resides in the cytoplasm. It carries out the reaction cytidine(1402) in 16S rRNA + S-adenosyl-L-methionine = N(4)-methylcytidine(1402) in 16S rRNA + S-adenosyl-L-homocysteine + H(+). In terms of biological role, specifically methylates the N4 position of cytidine in position 1402 (C1402) of 16S rRNA. The chain is Ribosomal RNA small subunit methyltransferase H from Pseudomonas putida (strain ATCC 47054 / DSM 6125 / CFBP 8728 / NCIMB 11950 / KT2440).